A 146-amino-acid polypeptide reads, in one-letter code: Large ribosomal subunit protein uL24z (146 aa).

2 disordered regions span residues 1 to 26 (MKYNPRVTSSRRKNRKAHFTASSSER) and 121 to 146 (KAKGRAAADKEKGTKFTSEDVMQNVD). The span at 9–18 (SSRRKNRKAH) shows a compositional bias: basic residues. Positions 121–138 (KAKGRAAADKEKGTKFTS) are enriched in basic and acidic residues.

This sequence belongs to the universal ribosomal protein uL24 family.

The sequence is that of Large ribosomal subunit protein uL24z (RPL26A) from Arabidopsis thaliana (Mouse-ear cress).